The primary structure comprises 335 residues: Nucleoid-associated protein YejK (335 aa).

This sequence belongs to the YejK family.

The protein localises to the cytoplasm. The protein resides in the nucleoid. The protein is Nucleoid-associated protein YejK of Salmonella enteritidis PT4 (strain P125109).